Reading from the N-terminus, the 91-residue chain is Non-specific lipid-transfer protein 1 (91 aa).

4 disulfide bridges follow: cysteine 4–cysteine 51, cysteine 14–cysteine 28, cysteine 29–cysteine 74, and cysteine 49–cysteine 88.

In terms of tissue distribution, detected in seeds (at protein level).

In terms of biological role, plant non-specific lipid-transfer proteins transfer phospholipids as well as galactolipids across membranes. May play a role in wax or cutin deposition in the cell walls of expanding epidermal cells and certain secretory tissues. The sequence is that of Non-specific lipid-transfer protein 1 from Trachyspermum ammi (Ajowan caraway).